Here is a 140-residue protein sequence, read N- to C-terminus: FLYWCH family member 2 (140 aa).

2 disordered regions span residues 1–39 (MPLP…PRKF) and 84–140 (HPEA…GKSL). At Ser-21 the chain carries Phosphoserine. The segment covering 98–114 (PEQKRSRQDPGTDRTED) has biased composition (basic and acidic residues). The span at 118-127 (AAGPPEAAGE) shows a compositional bias: low complexity.

The chain is FLYWCH family member 2 (FLYWCH2) from Homo sapiens (Human).